Here is a 123-residue protein sequence, read N- to C-terminus: Glycine cleavage system H protein (123 aa).

The 82-residue stretch at 23–104 (HWLAGITDHA…PYDAWIFSFE (82 aa)) folds into the Lipoyl-binding domain. Position 64 is an N6-lipoyllysine (Lys64).

This sequence belongs to the GcvH family. As to quaternary structure, the glycine cleavage system is composed of four proteins: P, T, L and H. (R)-lipoate is required as a cofactor.

Functionally, the glycine cleavage system catalyzes the degradation of glycine. The H protein shuttles the methylamine group of glycine from the P protein to the T protein. This chain is Glycine cleavage system H protein, found in Methylobacillus flagellatus (strain ATCC 51484 / DSM 6875 / VKM B-1610 / KT).